We begin with the raw amino-acid sequence, 740 residues long: Platelet endothelial cell adhesion molecule (740 aa).

An N-terminal signal peptide occupies residues 1 to 27; it reads MRLRWTQGGNMWLGVLLTLQLCSSLEG. Topologically, residues 28–602 are extracellular; sequence QENSFTINSI…VRVYLAPWKK (575 aa). Ig-like C2-type domains follow at residues 35-126, 145-223, and 236-315; these read NSIH…YKVV, GGVV…DSVR, and PKFH…SKVS. N-linked (GlcNAc...) asparagine glycans are attached at residues Asn-52 and Asn-84. 3 disulfide bridges follow: Cys-57–Cys-109, Cys-152–Cys-206, and Cys-256–Cys-304. N-linked (GlcNAc...) asparagine glycans are attached at residues Asn-284, Asn-301, Asn-320, Asn-357, Asn-372, Asn-436, Asn-456, and Asn-552. 3 consecutive Ig-like C2-type domains span residues 328–404, 425–494, and 500–592; these read PKLK…VQIA, GQTI…KVLR, and PVEE…NILA. Disulfide bonds link Cys-347–Cys-387, Cys-432–Cys-477, and Cys-524–Cys-573. A helical membrane pass occupies residues 603–621; the sequence is GLIAVVVIAVIIAVLLLGA. The Cytoplasmic segment spans residues 622–740; sequence RFYFLKKSKA…SRTEGSLDGT (119 aa). Short sequence motifs (ITIM motif) lie at residues 690–695 and 713–718; these read VEYTEV and TVYSEI. Phosphotyrosine; by FER occurs at positions 692 and 715. A disordered region spans residues 697 to 740; that stretch reads VTSPEPHRGLGTKGTETVYSEIRKADPDLVENRYSRTEGSLDGT. Positions 711-731 are membrane-bound segment which detaches upon phosphorylation; sequence TETVYSEIRKADPDLVENRYS. Residues 717–732 show a composition bias toward basic and acidic residues; sequence EIRKADPDLVENRYSR. A may play a role in cytoprotective signaling region spans residues 723–740; sequence PDLVENRYSRTEGSLDGT. 2 positions are modified to phosphoserine: Ser-731 and Ser-736.

In terms of assembly, trans-homodimer (via Ig-like C2-type 1 and Ig-like C2-type 2 domains); trans-homodimerization is required for cell-cell interaction. Forms a complex with BDKRB2 and GNAQ. Interacts with BDKRB2 and GNAQ. Interacts with PTPN11; Tyr-715 is critical for PTPN11 recruitment. Interacts with FER. Interacts with CD177; the interaction is Ca(2+)-dependent; the interaction is direct. In terms of processing, phosphorylated on Ser and Tyr residues by src kinases after cellular activation. Upon activation, phosphorylated on Ser-731 which probably initiates the dissociation of the membrane-interaction segment (residues 711-731) from the cell membrane allowing the sequential phosphorylation of Tyr-715 and Tyr-692. Constitutively phosphorylated on Ser-736 in resting platelets. Phosphorylated on tyrosine residues by FER and FES in response to FCER1 activation. In endothelial cells Fyn mediates mechanical-force (stretch or pull) induced tyrosine phosphorylation. Palmitoylation by ZDHHC21 is necessary for cell surface expression in endothelial cells and enrichment in membrane rafts.

The protein resides in the cell membrane. The protein localises to the membrane raft. It is found in the cell junction. Functionally, cell adhesion molecule which is required for leukocyte transendothelial migration (TEM) under most inflammatory conditions. Tyr-692 plays a critical role in TEM and is required for efficient trafficking of PECAM1 to and from the lateral border recycling compartment (LBRC) and is also essential for the LBRC membrane to be targeted around migrating leukocytes. Trans-homophilic interaction may play a role in endothelial cell-cell adhesion via cell junctions. Heterophilic interaction with CD177 plays a role in transendothelial migration of neutrophils. Homophilic ligation of PECAM1 prevents macrophage-mediated phagocytosis of neighboring viable leukocytes by transmitting a detachment signal. Promotes macrophage-mediated phagocytosis of apoptotic leukocytes by tethering them to the phagocytic cells; PECAM1-mediated detachment signal appears to be disabled in apoptotic leukocytes. Modulates bradykinin receptor BDKRB2 activation. Regulates bradykinin- and hyperosmotic shock-induced ERK1/2 activation in endothelial cells. Induces susceptibility to atherosclerosis. The protein is Platelet endothelial cell adhesion molecule (PECAM1) of Sus scrofa (Pig).